We begin with the raw amino-acid sequence, 706 residues long: MFDKHVKTFQYGNQTVTLETGEIARQAAAAVKVSMGDTVVLVAVTTNKEVKEGQDFFPLTVDYLERTYAAGKIPGGFFKREGKQSEKEILTSRLIDRPIRPLFPEGFYHDIQIVAMVVSVDPEIDSDIPAMLGASAALVLSGVPFAGPIGAARVGYINGVYVLNPTKAELAKSQLDLVVAGTSKAVLMVESEAKILPEDVMLGAVVYGHDQMQVAINAINEFADEVNPELWDWKAPETNEELVAKVRGIAGETIKEAFKIRQKQARSAKLDEAWSAVKEALITEETDTLAANEIKGIFKHLEADVVRSQILDGQPRIDGRDTRTVRPLNIQTGVLPRTHGSALFTRGETQALAVATLGTSRDEQIIDALSGEYTDRFMLHYNFPPYSTGEVGRMGAPKRREIGHGRLAKRALLAVLPKPEDFSYTMRVVSEITESNGSSSMASVCGGCLSLLSAGVPLKAHVAGIAMGLILEGNKFAVLTDILGDEDHLGDMDFKVAGTTEGVTALQMDIKIQGITKEIMQIALAQAKEARLHILDQMKAAVAGPQELSAHAPRLFTMKINQDKIREVIGKGGETIRAITAETGTEINIAEDGTITIAATTQEAGDAAKKRIEQITAEVEVGKVYEGTVVKILDNNVGAIVSVMPGKDGLVHISQIAHERVRNVGDYLQVGQVVNVKALEVDDRGRVRLSIKALLDAPAREENAAE.

Aspartate 487 and aspartate 493 together coordinate Mg(2+). The KH domain occupies 553-612 (PRLFTMKINQDKIREVIGKGGETIRAITAETGTEINIAEDGTITIAATTQEAGDAAKKRI). In terms of domain architecture, S1 motif spans 622 to 692 (GKVYEGTVVK…DRGRVRLSIK (71 aa)).

The protein belongs to the polyribonucleotide nucleotidyltransferase family. Mg(2+) is required as a cofactor.

The protein resides in the cytoplasm. The catalysed reaction is RNA(n+1) + phosphate = RNA(n) + a ribonucleoside 5'-diphosphate. Involved in mRNA degradation. Catalyzes the phosphorolysis of single-stranded polyribonucleotides processively in the 3'- to 5'-direction. The chain is Polyribonucleotide nucleotidyltransferase from Neisseria meningitidis serogroup A / serotype 4A (strain DSM 15465 / Z2491).